The sequence spans 423 residues: Imidazolonepropionase (423 aa).

The Fe(3+) site is built by His78 and His80. Zn(2+) is bound by residues His78 and His80. 3 residues coordinate 4-imidazolone-5-propanoate: Arg87, Tyr150, and His183. An N-formimidoyl-L-glutamate-binding site is contributed by Tyr150. Fe(3+) is bound at residue His247. Residue His247 participates in Zn(2+) binding. Residue Glu250 coordinates 4-imidazolone-5-propanoate. Residue Asp322 coordinates Fe(3+). Zn(2+) is bound at residue Asp322. Positions 324 and 326 each coordinate N-formimidoyl-L-glutamate. 4-imidazolone-5-propanoate is bound at residue Ser327.

The protein belongs to the metallo-dependent hydrolases superfamily. HutI family. It depends on Zn(2+) as a cofactor. Requires Fe(3+) as cofactor.

It is found in the cytoplasm. The enzyme catalyses 4-imidazolone-5-propanoate + H2O = N-formimidoyl-L-glutamate. The protein operates within amino-acid degradation; L-histidine degradation into L-glutamate; N-formimidoyl-L-glutamate from L-histidine: step 3/3. In terms of biological role, catalyzes the hydrolytic cleavage of the carbon-nitrogen bond in imidazolone-5-propanoate to yield N-formimidoyl-L-glutamate. It is the third step in the universal histidine degradation pathway. This is Imidazolonepropionase from Bacillus cereus (strain ZK / E33L).